Here is a 226-residue protein sequence, read N- to C-terminus: Cytidylate kinase (226 aa).

14–22 serves as a coordination point for ATP; sequence GPAGAGKST.

This sequence belongs to the cytidylate kinase family. Type 1 subfamily.

It is found in the cytoplasm. The catalysed reaction is CMP + ATP = CDP + ADP. The enzyme catalyses dCMP + ATP = dCDP + ADP. The chain is Cytidylate kinase from Symbiobacterium thermophilum (strain DSM 24528 / JCM 14929 / IAM 14863 / T).